A 251-amino-acid polypeptide reads, in one-letter code: Triosephosphate isomerase (251 aa).

9–11 is a binding site for substrate; sequence NWK. Catalysis depends on His95, which acts as the Electrophile. The Proton acceptor role is filled by Glu167. Substrate contacts are provided by residues Gly173, Ser212, and 233 to 234; that span reads GG.

Belongs to the triosephosphate isomerase family. As to quaternary structure, homodimer.

It localises to the cytoplasm. The enzyme catalyses D-glyceraldehyde 3-phosphate = dihydroxyacetone phosphate. It participates in carbohydrate biosynthesis; gluconeogenesis. The protein operates within carbohydrate degradation; glycolysis; D-glyceraldehyde 3-phosphate from glycerone phosphate: step 1/1. Functionally, involved in the gluconeogenesis. Catalyzes stereospecifically the conversion of dihydroxyacetone phosphate (DHAP) to D-glyceraldehyde-3-phosphate (G3P). The protein is Triosephosphate isomerase of Pseudomonas putida (strain GB-1).